We begin with the raw amino-acid sequence, 161 residues long: Regulator of ribonuclease activity A (161 aa).

The protein belongs to the RraA family. As to quaternary structure, homotrimer. Binds to both RNA-binding sites in the C-terminal region of Rne and to RhlB.

It is found in the cytoplasm. Its function is as follows. Globally modulates RNA abundance by binding to RNase E (Rne) and regulating its endonucleolytic activity. Can modulate Rne action in a substrate-dependent manner by altering the composition of the degradosome. Modulates RNA-binding and helicase activities of the degradosome. This is Regulator of ribonuclease activity A from Pseudoalteromonas atlantica (strain T6c / ATCC BAA-1087).